Reading from the N-terminus, the 85-residue chain is uncharacterized protein (85 aa).

This is an uncharacterized protein from Mycobacterium tuberculosis (strain CDC 1551 / Oshkosh).